We begin with the raw amino-acid sequence, 210 residues long: 3-hexulose-6-phosphate synthase 3 (210 aa).

Belongs to the HPS/KGPDC family. HPS subfamily.

The enzyme catalyses D-ribulose 5-phosphate + formaldehyde = D-arabino-hex-3-ulose 6-phosphate. The protein operates within one-carbon metabolism; formaldehyde assimilation via RuMP pathway; D-fructose 6-phosphate from D-ribulose 5-phosphate and formaldehyde: step 1/2. Its function is as follows. Catalyzes the condensation of ribulose 5-phosphate with formaldehyde to form 3-hexulose 6-phosphate. This chain is 3-hexulose-6-phosphate synthase 3, found in Staphylococcus saprophyticus subsp. saprophyticus (strain ATCC 15305 / DSM 20229 / NCIMB 8711 / NCTC 7292 / S-41).